The primary structure comprises 648 residues: MTNFEPKKLKKNWTIEDSISTYEIDKWGDKYFSINSKGNISVTKDINSEKKIDLFKLVRELKSREINTPLIIRFNDILKDRINALHDAFLKAIKTYKYKNIYQGVFPVKCNQQKNVLEKIIEFGSPWNFGLEVGSKSELLIGLALLENQNSLLICNGYKDKKYIEIATLARKLGKNPIIVIEQKDEVNRIIEAVQDLNASPLIGIRAKLSSKSSGRWSKSVGDNSKFGLSIPEIMSTIKELKEANLINEMRLLHFHIGSQISDIAVIKDALQEASQIYVELFKLGAPMKYIDVGGGLGIDFDGTKTSSNTSTNYSLQNYANDVIATIKDSCELNNIEHPTIISESGRAIISHCSVLIFNVLGTSHVSSKLKIYDDKKQSLIISNLIETFYELKKLKNKKINLSQIIELWNDAKKFKEDCLVAFRLGFLSLAERAYAEELTWACAKEIANNLNNDEINHPDLFEITETLASTYYANLSIFKSIPDCWAINQIFPIMPIHRHLEEPFCKGNFADLTCDSDGKLNSFINNGKIKSLLNLHEPEQDKDYLIGIFMTGAYQEALGNLHNLFGNTNVVHIDINQNDSYKVKNIIKEDSKSEILQLLDYSSASLVESIRINTEAAIDQKKLTIEEARKLIDQIEISLRKSSYLSE.

Lysine 109 is subject to N6-(pyridoxal phosphate)lysine. Position 291-301 (isoleucine 291–phenylalanine 301) interacts with substrate.

The protein belongs to the Orn/Lys/Arg decarboxylase class-II family. SpeA subfamily. The cofactor is Mg(2+). Pyridoxal 5'-phosphate is required as a cofactor.

It carries out the reaction L-arginine + H(+) = agmatine + CO2. It functions in the pathway amine and polyamine biosynthesis; agmatine biosynthesis; agmatine from L-arginine: step 1/1. Functionally, catalyzes the biosynthesis of agmatine from arginine. The chain is Biosynthetic arginine decarboxylase from Prochlorococcus marinus (strain MIT 9215).